A 312-amino-acid polypeptide reads, in one-letter code: Src-like-adapter (312 aa).

The interval 1 to 33 (MLCRLPGPSTSRGEKEMGNSMKSTPAPLERPLS) is disordered. Residues 38 to 98 (LESDFLAVLN…PGICVARVYH (61 aa)) enclose the SH3 domain. The region spanning 100–191 (WLFEGLGRDK…GLCCVLTTPC (92 aa)) is the SH2 domain. The tract at residues 206 to 312 (CTSPGSPVTL…TQKTKALTAT (107 aa)) is SLA C-terminal. Serine 274 is modified (phosphoserine).

As to quaternary structure, homodimer. Interacts with phosphorylated CBL, SYK and LAT. Homodimerization and interaction with phosphorylated CBL occurs via its C-terminal domain. Interacts with PDGFRB and EPHA2. Interacts with phosphorylated proteins ZAP70; CD3Z; VAV1 and LCP2 via its SH2 domain. Phosphorylated.

Its subcellular location is the cytoplasm. It localises to the endosome. Adapter protein, which negatively regulates T-cell receptor (TCR) signaling. Inhibits T-cell antigen-receptor induced activation of nuclear factor of activated T-cells. Involved in the negative regulation of positive selection and mitosis of T-cells. May act by linking signaling proteins such as ZAP70 with CBL, leading to a CBL dependent degradation of signaling proteins. The protein is Src-like-adapter (Sla) of Rattus norvegicus (Rat).